Here is a 174-residue protein sequence, read N- to C-terminus: Ribosome maturation factor RimM (174 aa).

The PRC barrel domain occupies 97–169; it reads PDTYYDHQLE…ILEIDPPDGL (73 aa).

It belongs to the RimM family. In terms of assembly, binds ribosomal protein uS19.

The protein localises to the cytoplasm. An accessory protein needed during the final step in the assembly of 30S ribosomal subunit, possibly for assembly of the head region. Essential for efficient processing of 16S rRNA. May be needed both before and after RbfA during the maturation of 16S rRNA. It has affinity for free ribosomal 30S subunits but not for 70S ribosomes. The sequence is that of Ribosome maturation factor RimM from Mycobacterium ulcerans (strain Agy99).